The primary structure comprises 311 residues: MKKKIGLLVMAYGTPYKEEDIERYYTHIRRGRKPSPEMLEDLTERYRAIGGISPLATITLEQAKKLEKRLNEVQDEVEYHMYLGLKHIEPFIEDAVKDMHNDGIQDAIALVLAPHYSTFSVKSYVGRAQEEAEKLGNLTIHGIDSWYKEPKFIQYWVDAVKGIYNGMSDAEREKAVLIVSAHSLPEKIIAMGDPYPEQLHETADYIARGAEVANYAVGWQSAGNTPDPWIGPDVQDLTRELNEKHGYTSFVYAPVGFVAEHLEVLYDNDFECKVVTDEIGAKYYRPEMPNASDAFIDCLTDVVLKKKESVL.

Residues Tyr12, Arg29, 45–46 (RY), Ser53, and Tyr124 contribute to the Fe-coproporphyrin III site. 2 residues coordinate Fe(2+): His182 and Glu263.

The protein belongs to the ferrochelatase family.

It localises to the cytoplasm. It carries out the reaction Fe-coproporphyrin III + 2 H(+) = coproporphyrin III + Fe(2+). It functions in the pathway porphyrin-containing compound metabolism; protoheme biosynthesis. Functionally, involved in coproporphyrin-dependent heme b biosynthesis. Catalyzes the insertion of ferrous iron into coproporphyrin III to form Fe-coproporphyrin III. The protein is Coproporphyrin III ferrochelatase 1 of Bacillus cereus (strain ATCC 10987 / NRS 248).